The chain runs to 201 residues: Small ribosomal subunit protein uS4c (201 aa).

The segment at 20-39 (GLTRKTPKSGSNLKKKFHSG) is disordered. The S4 RNA-binding domain maps to 89–150 (MRLDNILFRL…NQRSKRLVQN (62 aa)).

Belongs to the universal ribosomal protein uS4 family. Part of the 30S ribosomal subunit. Contacts protein S5. The interaction surface between S4 and S5 is involved in control of translational fidelity.

The protein localises to the plastid. The protein resides in the chloroplast. Functionally, one of the primary rRNA binding proteins, it binds directly to 16S rRNA where it nucleates assembly of the body of the 30S subunit. In terms of biological role, with S5 and S12 plays an important role in translational accuracy. The chain is Small ribosomal subunit protein uS4c (rps4) from Oryza nivara (Indian wild rice).